A 497-amino-acid polypeptide reads, in one-letter code: MAAAGPGAALSPRRCDSDPASPGAQSPKDDNEDNSNDGGHPSKRRRMGSGDSSRSCETSSQDLSFSYYPAENLIEYKWPPDETGEYYMLQEQVSEYLGVTSFKRKYPDLERRDLSHKEKLYLRELNVITETQCTLGLTALRSDEVIDLMIKEYPAKHAEYSVILQEKERQRITDHYKEYSQMQQQSTQKVEASKVPEYIKKAAKKAAEFNSNLNRERMEERRAYFDLQTHVIQVPQGKYKVLPTDRTKVSSYPVALIPGQFQEYYKRYSPDELRYLPLNTALYEPPLDPELPALDSDGDSDDGEDGGGDEKRKNKGTSDSSSGNVSEGDSPPDSQEDTFQGRQKSKDKMATPRKDGSKRSVLSKSVPGYKPKVIPNALCGICLKGKESNKKGKAESLIHCSQCDNSGHPSCLDMTMELVSMIKTYPWQCMECKTCIICGQPHHEEEMMFCDVCDRGYHTFCVGLGAIPSGRWICDCCQRAPPTPRKVGRRGKNSKEG.

Residues 1–61 form a disordered region; that stretch reads MAAAGPGAAL…SSRSCETSSQ (61 aa). Ser11, Ser35, and Ser49 each carry phosphoserine. The segment at 88-184 is essential to induce neural progenitor proliferation; it reads MLQEQVSEYL…HYKEYSQMQQ (97 aa). The interval 88–294 is SAY; the sequence is MLQEQVSEYL…PPLDPELPAL (207 aa). Lys240 is covalently cross-linked (Glycyl lysine isopeptide (Lys-Gly) (interchain with G-Cter in SUMO2)). Ser269 is modified (phosphoserine). The segment covering 284–295 has biased composition (low complexity); sequence EPPLDPELPALD. Residues 284–367 form a disordered region; the sequence is EPPLDPELPA…KRSVLSKSVP (84 aa). The segment at 291–333 is essential to induce neural progenitor proliferation; the sequence is LPALDSDGDSDDGEDGGGDEKRKNKGTSDSSSGNVSEGDSPPD. A phosphoserine mark is found at Ser296, Ser300, Ser326, and Ser330. The span at 296 to 307 shows a compositional bias: acidic residues; that stretch reads SDGDSDDGEDGG. A compositionally biased stretch (polar residues) spans 317-327; the sequence is TSDSSSGNVSE. Basic and acidic residues predominate over residues 344 to 358; it reads KSKDKMATPRKDGSK. A PHD-type 1; degenerate zinc finger spans residues 378-435; it reads LCGICLKGKESNKKGKAESLIHCSQCDNSGHPSCLDMTMELVSMIKTYPWQCMECKTC. Residue Lys384 forms a Glycyl lysine isopeptide (Lys-Gly) (interchain with G-Cter in SUMO2) linkage. The segment at 437–480 adopts a PHD-type 2; degenerate zinc-finger fold; the sequence is ICGQPHHEEEMMFCDVCDRGYHTFCVGLGAIPSGRWICDCCQRA.

Belongs to the SAYP family. Component of neural progenitors-specific chromatin remodeling complex (npBAF complex) composed of at least, ARID1A/BAF250A or ARID1B/BAF250B, SMARCD1/BAF60A, SMARCD3/BAF60C, SMARCA2/BRM/BAF190B, SMARCA4/BRG1/BAF190A, SMARCB1/BAF47, SMARCC1/BAF155, SMARCE1/BAF57, SMARCC2/BAF170, PHF10/BAF45A, ACTL6A/BAF53A and actin. Interacts with ACTL6A/BAF53A, SMARCA2/BRM/BAF190B, SMARCA4/BRG1/BAF190A and PBRM1/BAF180.

It localises to the nucleus. In terms of biological role, involved in transcription activity regulation by chromatin remodeling. Belongs to the neural progenitors-specific chromatin remodeling complex (npBAF complex) and is required for the proliferation of neural progenitors. During neural development a switch from a stem/progenitor to a post-mitotic chromatin remodeling mechanism occurs as neurons exit the cell cycle and become committed to their adult state. The transition from proliferating neural stem/progenitor cells to post-mitotic neurons requires a switch in subunit composition of the npBAF and nBAF complexes. As neural progenitors exit mitosis and differentiate into neurons, npBAF complexes which contain ACTL6A/BAF53A and PHF10/BAF45A, are exchanged for homologous alternative ACTL6B/BAF53B and DPF1/BAF45B or DPF3/BAF45C subunits in neuron-specific complexes (nBAF). The npBAF complex is essential for the self-renewal/proliferative capacity of the multipotent neural stem cells. The nBAF complex along with CREST plays a role regulating the activity of genes essential for dendrite growth. This Rattus norvegicus (Rat) protein is PHD finger protein 10 (Phf10).